Here is a 147-residue protein sequence, read N- to C-terminus: Hemoglobin subunit beta-1 (147 aa).

An N-acetylvaline modification is found at Val2. The region spanning 3–147 (HLTGEEKAAV…VATALAHKYH (145 aa)) is the Globin domain. Lys18 is subject to N6-succinyllysine. Position 45 is a phosphoserine (Ser45). Residue Lys60 is modified to N6-succinyllysine. The heme b site is built by His64 and His93. An Asymmetric dimethylarginine modification is found at Arg105. Thr124 is subject to Phosphothreonine.

Belongs to the globin family. In terms of assembly, hb1 is a heterotetramer of two alpha chains and two beta-1 chains. As to expression, red blood cells.

Functionally, involved in oxygen transport from the lung to the various peripheral tissues. In Chalinolobus morio (Chocolate-wattled bat), this protein is Hemoglobin subunit beta-1 (HBB1).